Reading from the N-terminus, the 427-residue chain is NADH-quinone oxidoreductase subunit 14 (427 aa).

14 helical membrane passes run 1 to 21 (MTLA…FVLP), 30 to 50 (LLGL…PFAF), 57 to 77 (GVSQ…VGLV), 79 to 99 (SGRF…HLLA), 104 to 124 (LLLM…LATW), 137 to 157 (FLLG…FYGA), 172 to 192 (YALA…LAPF), 204 to 224 (PTPV…AALL), 230 to 250 (PEAL…AALA), 257 to 277 (LLAY…YTGN), 280 to 300 (ALGF…AVLS), 322 to 342 (LGLA…LAGF), 360 to 380 (VLVL…GLGL), and 400 to 420 (AAVV…GLVL).

This sequence belongs to the complex I subunit 2 family. NDH-1 is composed of 15 different subunits, Nqo1 to Nqo15. The complex has a L-shaped structure, with the hydrophobic arm (subunits Nqo7, Nqo8 and Nqo10 to Nqo14) embedded in the membrane and the hydrophilic peripheral arm (subunits Nqo1 to Nqo6, Nqo9 and Nqo15) protruding into the bacterial cytoplasm. The hydrophilic domain contains all the redox centers.

The protein localises to the cell inner membrane. The enzyme catalyses a quinone + NADH + 5 H(+)(in) = a quinol + NAD(+) + 4 H(+)(out). In terms of biological role, NDH-1 shuttles electrons from NADH, via FMN and iron-sulfur (Fe-S) centers, to quinones in the respiratory chain. The immediate electron acceptor for the enzyme in this species is menaquinone. Couples the redox reaction to proton translocation (for every two electrons transferred, four hydrogen ions are translocated across the cytoplasmic membrane), and thus conserves the redox energy in a proton gradient required for the synthesis of ATP. This chain is NADH-quinone oxidoreductase subunit 14 (nqo14), found in Thermus thermophilus (strain ATCC 27634 / DSM 579 / HB8).